The chain runs to 686 residues: Protein MxiA (686 aa).

6 consecutive transmembrane segments (helical) span residues 28-52, 105-129, 197-216, 232-256, 274-292, and 299-315; these read LIIPLPTYLVDFLIGLNIVLAILVF, FVIGDSLAVGFVIFSIVTVVQFIVI, AIAGIIIIFVNLIGGISVGM, ILTIGDGLVSQIPALLISISAGFIV, IFGNPFVLIVTSALALAIG, and FFVFFLIAVTLTALFYY.

This sequence belongs to the FHIPEP (flagella/HR/invasion proteins export pore) family.

It is found in the cell inner membrane. In terms of biological role, necessary for the secretion of IPA invasins. The protein is Protein MxiA (mxiA) of Shigella flexneri.